Reading from the N-terminus, the 119-residue chain is Protein SPIRAL1 (119 aa).

The span at 1–11 shows a compositional bias: gly residues; it reads MGRGNSCGGGQ. Disordered stretches follow at residues 1–47 and 85–105; these read MGRG…PPVT and EGQN…HAAP. Pro residues predominate over residues 24-34; it reads APKPVPAPRPA.

This sequence belongs to the SPIRAL1 family. Ubiquitinated. Upon salt-stress induction, it is subject to proteasome-dependent degradation. As to expression, ubiquitous. High expression was associated with tissues undergoing rapid cell expansion, including the root elongation zone, hypocotyls of dark grown-seedlings, and cotyledons of light-grown seedlings.

It localises to the cytoplasm. It is found in the cytoskeleton. The protein resides in the phragmoplast. The protein localises to the spindle. Functionally, required for directional control of cell elongation. Stabilizes growing ends of cortical microtubules and influences their dynamic properties. Acts redundantly with SP1Ls in maintaining the cortical microtubules organization essential for anisotropic cell growth. Plays a key role in salt stress-induced microtubules disassembly. The protein is Protein SPIRAL1 (SPR1) of Arabidopsis thaliana (Mouse-ear cress).